Consider the following 575-residue polypeptide: Septation ring formation regulator EzrA (575 aa).

Topologically, residues 1–8 are extracellular; sequence MSNGQLIY. A helical transmembrane segment spans residues 9–27; that stretch reads LMVAIAVILVLAYVVAIFL. Residues 28–575 are Cytoplasmic-facing; the sequence is RKRNEGRLEA…YEKTRETIRF (548 aa). Coiled-coil stretches lie at residues 110–191, 265–301, 354–416, and 456–526; these read QIDQ…FVTL, LYEAFKKNQENIRQLELDNAEYENGQAQEEINALYDI, VRRI…IEKD, and TASN…IQEA.

It belongs to the EzrA family.

Its subcellular location is the cell membrane. Negative regulator of FtsZ ring formation; modulates the frequency and position of FtsZ ring formation. Inhibits FtsZ ring formation at polar sites. Interacts either with FtsZ or with one of its binding partners to promote depolymerization. This chain is Septation ring formation regulator EzrA, found in Streptococcus pneumoniae (strain JJA).